A 243-amino-acid chain; its full sequence is Putative ABC transporter arginine-binding protein 2 (243 aa).

Residues 1–19 (MKKVLIAALIAGFSLSATA) form the signal peptide.

This sequence belongs to the bacterial solute-binding protein 3 family. In terms of assembly, the complex is composed of two ATP-binding proteins (ArtP), two transmembrane proteins (ArtM and ArtQ) and two solute-binding proteins (ArtJ and ArtI).

It localises to the periplasm. Its function is as follows. Part of the ABC transporter complex ArtPIQMJ involved in arginine transport. The chain is Putative ABC transporter arginine-binding protein 2 (artI) from Escherichia coli (strain K12).